A 561-amino-acid polypeptide reads, in one-letter code: Arf-GAP domain and FG repeat-containing protein 1 (561 aa).

Positions 11 to 135 (EKHLKMLRDM…WYVPPEQAKV (125 aa)) constitute an Arf-GAP domain. The C4-type zinc finger occupies 29–52 (CFDCDQRGPTYVNMTVGSFVCTSC). S167 is subject to Phosphoserine. Positions 171–193 (LHLNKGTPTQSPVVGRSQGQQQE) are disordered. A compositionally biased stretch (polar residues) spans 176-191 (GTPTQSPVVGRSQGQQ). T177 bears the Phosphothreonine mark. S181 and S362 each carry phosphoserine. O-linked (GlcNAc) serine glycosylation is present at S367. Residues 409–451 (PVGASPQTQPASSGPAPFGATPSTNPFVAATGPSAASSTNPFQ) form a disordered region. Over residues 442 to 451 (SAASSTNPFQ) the composition is skewed to polar residues.

As to quaternary structure, interacts with EPS15R and EPS15. Interacts with FCHO1. Post-translationally, O-glycosylated.

The protein localises to the nucleus. It localises to the cytoplasmic vesicle. In terms of biological role, required for vesicle docking or fusion during acrosome biogenesis. May play a role in RNA trafficking or localization. This chain is Arf-GAP domain and FG repeat-containing protein 1 (Agfg1), found in Rattus norvegicus (Rat).